The chain runs to 487 residues: Glutamyl-tRNA(Gln) amidotransferase subunit A (487 aa).

Residues Lys82 and Ser157 each act as charge relay system in the active site. Ser181 (acyl-ester intermediate) is an active-site residue.

This sequence belongs to the amidase family. GatA subfamily. In terms of assembly, heterotrimer of A, B and C subunits.

The catalysed reaction is L-glutamyl-tRNA(Gln) + L-glutamine + ATP + H2O = L-glutaminyl-tRNA(Gln) + L-glutamate + ADP + phosphate + H(+). Its function is as follows. Allows the formation of correctly charged Gln-tRNA(Gln) through the transamidation of misacylated Glu-tRNA(Gln) in organisms which lack glutaminyl-tRNA synthetase. The reaction takes place in the presence of glutamine and ATP through an activated gamma-phospho-Glu-tRNA(Gln). The sequence is that of Glutamyl-tRNA(Gln) amidotransferase subunit A from Fusobacterium nucleatum subsp. nucleatum (strain ATCC 25586 / DSM 15643 / BCRC 10681 / CIP 101130 / JCM 8532 / KCTC 2640 / LMG 13131 / VPI 4355).